Here is a 425-residue protein sequence, read N- to C-terminus: Serine--tRNA ligase (425 aa).

An L-serine-binding site is contributed by 231-233; sequence TAE. Residues 262 to 264 and Val-278 contribute to the ATP site; that span reads RTE. Glu-285 contacts L-serine. 349–352 provides a ligand contact to ATP; that stretch reads EVTS. Thr-384 provides a ligand contact to L-serine.

The protein belongs to the class-II aminoacyl-tRNA synthetase family. Type-1 seryl-tRNA synthetase subfamily. As to quaternary structure, homodimer. The tRNA molecule binds across the dimer.

Its subcellular location is the cytoplasm. The enzyme catalyses tRNA(Ser) + L-serine + ATP = L-seryl-tRNA(Ser) + AMP + diphosphate + H(+). The catalysed reaction is tRNA(Sec) + L-serine + ATP = L-seryl-tRNA(Sec) + AMP + diphosphate + H(+). It participates in aminoacyl-tRNA biosynthesis; selenocysteinyl-tRNA(Sec) biosynthesis; L-seryl-tRNA(Sec) from L-serine and tRNA(Sec): step 1/1. In terms of biological role, catalyzes the attachment of serine to tRNA(Ser). Is also able to aminoacylate tRNA(Sec) with serine, to form the misacylated tRNA L-seryl-tRNA(Sec), which will be further converted into selenocysteinyl-tRNA(Sec). This is Serine--tRNA ligase from Dictyoglomus turgidum (strain DSM 6724 / Z-1310).